Reading from the N-terminus, the 307-residue chain is E3 ubiquitin-protein ligase PHF7 (307 aa).

A C2HC pre-PHD-type zinc finger spans residues 30–68; that stretch reads SPVCLLCLQEPGDPEKLGEFLQKDNLCVHYFCLILSSRL. 4 residues coordinate Zn(2+): cysteine 33, cysteine 36, histidine 58, and cysteine 61. Residues 67–92 form a required for interaction and ubiquitination of the nucleosome core particle region; that stretch reads RLPQKGQPNRGLHGFMPEDIKREAVR. A PHD-type zinc finger spans residues 96 to 145; that stretch reads KICFVCKKKGAAIRCQNDQCVQNFHLPCGQERGCLSQFFGEYKSYCRKHR. Residues cysteine 98, cysteine 101, cysteine 110, cysteine 115, histidine 120, cysteine 123, cysteine 141, histidine 144, cysteine 160, cysteine 163, cysteine 179, cysteine 180, histidine 186, cysteine 189, cysteine 204, cysteine 207, cysteine 248, cysteine 253, cysteine 273, cysteine 276, histidine 282, cysteine 285, cysteine 297, and cysteine 300 each coordinate Zn(2+). The required for interaction with ubiquitinated UBE2D2 stretch occupies residues 150–307; that stretch reads IHQGSLGEES…NECLPASTTS (158 aa). An RING-type; degenerate zinc finger spans residues 160-208; that stretch reads CVLCCENLSRTSVENIQSPCCSQAIYHRKCIQKYAHTSAKHFFKCPQCN. Positions 244–301 are required for association with and ubiquitination of H3; the sequence is RYRHCDAPICLYEQGRDSFEDEGRWRLILCATCGSHGTHRDCSSLRPNSKKWECNECL.

Interacts with MEF2C; the interaction promotes MEF2C binding to its transcription targets. Interacts with GATA4; the interaction promotes GATA4 binding to its transcription targets. Interacts with UBE2D2; the interaction inhibits cleavage of PHF7 and promotes association of the complex with the nucleosome core particle. As to expression, expressed in Leydig cells and in developing spermatids (at protein level). Highly expressed in Sertoli cells in testis.

It localises to the nucleus. The enzyme catalyses S-ubiquitinyl-[E2 ubiquitin-conjugating enzyme]-L-cysteine + [acceptor protein]-L-lysine = [E2 ubiquitin-conjugating enzyme]-L-cysteine + N(6)-ubiquitinyl-[acceptor protein]-L-lysine.. It functions in the pathway protein modification; protein ubiquitination. E3 ubiquitin-protein ligase which ubiquitinates histone H3 at 'Lys-14'. Required for male fertility, via inhibition of SPOP-mediated BRDT degradation when in the presence of acetylated histone H4 in early condensing spermatids. Stabilization of BRDT allows it to facilitate histone removal in early condensing spermatids and promote the progression of histone-to-protamine exchange. Promotes the expression of steroidogenesis proteins in the testes, and as a result plays a role in maintaining testosterone levels and repressing osteoclastogenesis. Promotes transcription of cardiac enhancer genes by facilitating binding of cardiac transcription factors such as MEF2C and GATA4 to target gene promoters. Ubiquitinates histone H4. Ubiquitinates histone H2A and H3 as part of the nucleosome core particle. This Mus musculus (Mouse) protein is E3 ubiquitin-protein ligase PHF7.